The sequence spans 305 residues: UPF0450 protein C17orf58 homolog (305 aa).

A signal peptide spans 1–22 (MTARALWLLCLIVGWSPEAPVA). The segment at 18–160 (EAPVAERKAP…DREPETQSCA (143 aa)) is disordered. Over residues 21 to 39 (VAERKAPPPHRKPDSRETP) the composition is skewed to basic and acidic residues. 3 cysteine pairs are disulfide-bonded: Cys159-Cys233, Cys163-Cys237, and Cys174-Cys304. Residues 159-304 (CARACSADAD…QVRGATHTQC (146 aa)) form the NTR domain.

It belongs to the UPF0450 family.

This chain is UPF0450 protein C17orf58 homolog, found in Mus musculus (Mouse).